The following is a 259-amino-acid chain: DNA-directed RNA polymerase 30 kDa polypeptide (259 aa).

The TFIIS-type zinc finger occupies 155–195; sequence YNTPCPNCKSRNTTPMMIQTRAADEPPLVRHACRDCKQHFK. Positions 159, 162, 187, and 190 each coordinate Zn(2+). The interval 220–259 is disordered; that stretch reads EILPDNNPSPPESPEPASPIDDGLIRATFDRNDEPPEDDE. Over residues 226–236 the composition is skewed to pro residues; that stretch reads NPSPPESPEPA.

Belongs to the poxviridae DNA-directed RNA polymerase 30 kDa subunit family. In terms of assembly, the DNA-dependent RNA polymerase (vRNAP) consists of eight subunits encoded by early viral genes and termed according to their apparent molecular masses Rpo147, Rpo132, Rpo35, Rpo30, Rpo22, Rpo19, Rpo18, and Rpo7. The same holoenzyme, with the addition of the transcription-specificity factor RAP94, is used for early gene expression.

The protein localises to the virion. It is found in the host cytoplasm. It carries out the reaction RNA(n) + a ribonucleoside 5'-triphosphate = RNA(n+1) + diphosphate. In terms of biological role, part of the DNA-dependent RNA polymerase which catalyzes the transcription of viral DNA into RNA using the four ribonucleoside triphosphates as substrates. Responsible for the transcription of early, intermediate and late genes. DNA-dependent RNA polymerase associates with the early transcription factor (ETF), itself composed of OPG118 and OPG134, thereby allowing the early genes transcription. Late transcription, and probably also intermediate transcription, require newly synthesized RNA polymerase. In Monkeypox virus, this protein is DNA-directed RNA polymerase 30 kDa polypeptide (OPG066).